A 145-amino-acid polypeptide reads, in one-letter code: Angiogenin-3 (145 aa).

Positions 1–24 (MVMSPGSLLLVFLLSLDVIPPTLA) are cleaved as a signal peptide. Gln25 bears the Pyrrolidone carboxylic acid mark. The active-site Proton acceptor is His37. Intrachain disulfides connect Cys50–Cys104, Cys63–Cys115, and Cys81–Cys130. The Nucleolar localization signal signature appears at 55–59 (KKRKL). Residues Glu65 and His106 each contribute to the Zn(2+) site. Residue His137 is the Proton donor of the active site.

This sequence belongs to the pancreatic ribonuclease family.

The protein resides in the cytoplasmic vesicle. The protein localises to the secretory vesicle lumen. Its subcellular location is the secreted. It is found in the nucleus. It localises to the nucleolus. Its activity is regulated as follows. Divalent metal ions, such as Cu2+ and Zn2+, may inhibit the ribonucleolytic activity. Its function is as follows. Has low ribonuclease activity (in vitro). The sequence is that of Angiogenin-3 (Ang3) from Mus musculus (Mouse).